We begin with the raw amino-acid sequence, 162 residues long: NADH-quinone oxidoreductase subunit I (162 aa).

2 4Fe-4S ferredoxin-type domains span residues 52 to 82 and 93 to 122; these read LRRYPNGEERCIACKLCEAVCPAQAITIEAG and VRYDIDMVKCIYCGLCQEACPVDAIVEGPN. 8 residues coordinate [4Fe-4S] cluster: Cys62, Cys65, Cys68, Cys72, Cys102, Cys105, Cys108, and Cys112.

Belongs to the complex I 23 kDa subunit family. As to quaternary structure, NDH-1 is composed of 14 different subunits. Subunits NuoA, H, J, K, L, M, N constitute the membrane sector of the complex. [4Fe-4S] cluster is required as a cofactor.

The protein resides in the cell inner membrane. It carries out the reaction a quinone + NADH + 5 H(+)(in) = a quinol + NAD(+) + 4 H(+)(out). In terms of biological role, NDH-1 shuttles electrons from NADH, via FMN and iron-sulfur (Fe-S) centers, to quinones in the respiratory chain. The immediate electron acceptor for the enzyme in this species is believed to be ubiquinone. Couples the redox reaction to proton translocation (for every two electrons transferred, four hydrogen ions are translocated across the cytoplasmic membrane), and thus conserves the redox energy in a proton gradient. This is NADH-quinone oxidoreductase subunit I from Nitrobacter winogradskyi (strain ATCC 25391 / DSM 10237 / CIP 104748 / NCIMB 11846 / Nb-255).